A 367-amino-acid chain; its full sequence is Germination protease (367 aa).

Residues Met1 to Asp15 constitute a propeptide that is removed on maturation.

The protein belongs to the peptidase A25 family. In terms of assembly, homotetramer. In terms of processing, autoproteolytically processed. The inactive tetrameric zymogen termed p46 autoprocesses to a smaller form termed p41, which is active only during spore germination.

The catalysed reaction is Endopeptidase action with P4 Glu or Asp, P1 preferably Glu &gt; Asp, P1' hydrophobic and P2' Ala.. Initiates the rapid degradation of small, acid-soluble proteins during spore germination. The protein is Germination protease of Bacillus cereus (strain AH187).